A 389-amino-acid chain; its full sequence is S-adenosylmethionine synthase (389 aa).

H16 is an ATP binding site. A Mg(2+)-binding site is contributed by D18. E44 lines the K(+) pocket. L-methionine-binding residues include E57 and Q100. The segment at 100–110 is flexible loop; it reads QSPDIAQGVDE. ATP contacts are provided by residues 167 to 169, 233 to 234, D242, 248 to 249, A265, and K269; these read DAK, RF, and RK. D242 lines the L-methionine pocket. L-methionine is bound at residue K273.

The protein belongs to the AdoMet synthase family. As to quaternary structure, homotetramer; dimer of dimers. Requires Mg(2+) as cofactor. It depends on K(+) as a cofactor.

The protein localises to the cytoplasm. It catalyses the reaction L-methionine + ATP + H2O = S-adenosyl-L-methionine + phosphate + diphosphate. Its pathway is amino-acid biosynthesis; S-adenosyl-L-methionine biosynthesis; S-adenosyl-L-methionine from L-methionine: step 1/1. Functionally, catalyzes the formation of S-adenosylmethionine (AdoMet) from methionine and ATP. The overall synthetic reaction is composed of two sequential steps, AdoMet formation and the subsequent tripolyphosphate hydrolysis which occurs prior to release of AdoMet from the enzyme. This Acidithiobacillus ferrooxidans (strain ATCC 23270 / DSM 14882 / CIP 104768 / NCIMB 8455) (Ferrobacillus ferrooxidans (strain ATCC 23270)) protein is S-adenosylmethionine synthase.